Here is a 435-residue protein sequence, read N- to C-terminus: Serine--tRNA ligase (435 aa).

241–243 (TAE) is a binding site for L-serine. An ATP-binding site is contributed by 272–274 (RAE). Glu-295 is a binding site for L-serine. 359 to 362 (EISS) is a binding site for ATP. Ser-395 provides a ligand contact to L-serine.

Belongs to the class-II aminoacyl-tRNA synthetase family. Type-1 seryl-tRNA synthetase subfamily. In terms of assembly, homodimer. The tRNA molecule binds across the dimer.

The protein localises to the cytoplasm. The catalysed reaction is tRNA(Ser) + L-serine + ATP = L-seryl-tRNA(Ser) + AMP + diphosphate + H(+). It catalyses the reaction tRNA(Sec) + L-serine + ATP = L-seryl-tRNA(Sec) + AMP + diphosphate + H(+). The protein operates within aminoacyl-tRNA biosynthesis; selenocysteinyl-tRNA(Sec) biosynthesis; L-seryl-tRNA(Sec) from L-serine and tRNA(Sec): step 1/1. Its function is as follows. Catalyzes the attachment of serine to tRNA(Ser). Is also able to aminoacylate tRNA(Sec) with serine, to form the misacylated tRNA L-seryl-tRNA(Sec), which will be further converted into selenocysteinyl-tRNA(Sec). The sequence is that of Serine--tRNA ligase from Haemophilus ducreyi (strain 35000HP / ATCC 700724).